The sequence spans 449 residues: C4-dicarboxylate transport protein (449 aa).

Helical transmembrane passes span 18–38 (PFYLQLYFWVIIAIILGALLG), 61–81 (MIISPVIFLTIVTGIASVAHV), 93–113 (VYFLFFSTLALLLGLVVAHVV), 159–179 (FVGDNILQVLFVAVLFGIALA), 202–222 (LVQMLMKMAPIGAFGAIAFTI), 244–264 (SLLFVLVILGAVSWLCGFSIL), 311–331 (GYSFNLDGTNIYMTLAALFIA), and 369–389 (AATLAVVPEVPIAGMALILGV).

Belongs to the dicarboxylate/amino acid:cation symporter (DAACS) (TC 2.A.23) family.

It localises to the cell inner membrane. In terms of biological role, responsible for the transport of dicarboxylates such as succinate, fumarate, and malate from the periplasm across the membrane. This chain is C4-dicarboxylate transport protein, found in Xylella fastidiosa (strain M12).